A 439-amino-acid chain; its full sequence is Dihydroorotase (439 aa).

His73 and His75 together coordinate Zn(2+). Substrate-binding positions include 75–77 and Asn107; that span reads HLR. Residues Asp165, His192, and His245 each coordinate Zn(2+). Position 291 (Asn291) interacts with substrate. Position 318 (Asp318) interacts with Zn(2+). Asp318 is a catalytic residue. His322 serves as a coordination point for substrate.

It belongs to the metallo-dependent hydrolases superfamily. DHOase family. Class I DHOase subfamily. It depends on Zn(2+) as a cofactor.

The enzyme catalyses (S)-dihydroorotate + H2O = N-carbamoyl-L-aspartate + H(+). Its pathway is pyrimidine metabolism; UMP biosynthesis via de novo pathway; (S)-dihydroorotate from bicarbonate: step 3/3. In terms of biological role, catalyzes the reversible cyclization of carbamoyl aspartate to dihydroorotate. This is Dihydroorotase from Syntrophobacter fumaroxidans (strain DSM 10017 / MPOB).